Consider the following 211-residue polypeptide: MKKILMLIELSERNAIGRPVRITIRELADALNTSPQTVLRLLAELEDEGLIERKTEGRRTYIEILPKGLDFLQDICDKISNALSKGVIVGEVVSGLGEGAYYVRQYEPLIEEYLGFKPFPGTLNVKILFPKTVLDAVCNIRPVIIPGFVKDGRTFGDVKAYPVMIGGIKGAIVVPSRTIHPPRIAEIIAPVNLREALKLKDGDRVRLEVIQ.

Residues M1–K85 are H-T-H motif-like. Residues G86–Q211 form a riboflavin kinase region. CDP is bound at residue G95–A100. Residues T122 and N124 each contribute to the Mg(2+) site. FMN contacts are provided by T178 and E186. Position 191 to 194 (V191 to R194) interacts with CDP.

It belongs to the archaeal riboflavin kinase family. Mg(2+) is required as a cofactor.

The enzyme catalyses riboflavin + CTP = CDP + FMN + H(+). It functions in the pathway cofactor biosynthesis; FMN biosynthesis; FMN from riboflavin (CTP route): step 1/1. Its function is as follows. Catalyzes the CTP-dependent phosphorylation of riboflavin (vitamin B2) to form flavin mononucleotide (FMN). The sequence is that of Riboflavin kinase (ribK) from Thermococcus kodakarensis (strain ATCC BAA-918 / JCM 12380 / KOD1) (Pyrococcus kodakaraensis (strain KOD1)).